Consider the following 237-residue polypeptide: LexA repressor (237 aa).

The H-T-H motif DNA-binding region spans 26–46; that stretch reads FDEMKDALDLRSKSGIHRLIT. Active-site for autocatalytic cleavage activity residues include Ser158 and Lys196.

It belongs to the peptidase S24 family. In terms of assembly, homodimer.

The enzyme catalyses Hydrolysis of Ala-|-Gly bond in repressor LexA.. Represses a number of genes involved in the response to DNA damage (SOS response), including recA and lexA. In the presence of single-stranded DNA, RecA interacts with LexA causing an autocatalytic cleavage which disrupts the DNA-binding part of LexA, leading to derepression of the SOS regulon and eventually DNA repair. The sequence is that of LexA repressor from Rhodopseudomonas palustris (strain BisB18).